The following is a 514-amino-acid chain: L-threonine dehydratase biosynthetic IlvA (514 aa).

The residue at position 62 (K62) is an N6-(pyridoxal phosphate)lysine. Residues N89, 188–192 (GGGGL), and S315 contribute to the pyridoxal 5'-phosphate site. ACT-like domains are found at residues 339–411 (ALLA…DLSD) and 434–504 (RLYS…DETN).

The protein belongs to the serine/threonine dehydratase family. In terms of assembly, homotetramer. Pyridoxal 5'-phosphate is required as a cofactor.

The catalysed reaction is L-threonine = 2-oxobutanoate + NH4(+). It participates in amino-acid biosynthesis; L-isoleucine biosynthesis; 2-oxobutanoate from L-threonine: step 1/1. Isoleucine allosterically inhibits whereas valine allosterically activates this enzyme. Catalyzes the anaerobic formation of alpha-ketobutyrate and ammonia from threonine in a two-step reaction. The first step involved a dehydration of threonine and a production of enamine intermediates (aminocrotonate), which tautomerizes to its imine form (iminobutyrate). Both intermediates are unstable and short-lived. The second step is the nonenzymatic hydrolysis of the enamine/imine intermediates to form 2-ketobutyrate and free ammonia. In the low water environment of the cell, the second step is accelerated by RidA. This Escherichia coli (strain K12) protein is L-threonine dehydratase biosynthetic IlvA (ilvA).